Consider the following 127-residue polypeptide: Large ribosomal subunit protein bL17 (127 aa).

Belongs to the bacterial ribosomal protein bL17 family. Part of the 50S ribosomal subunit. Contacts protein L32.

The protein is Large ribosomal subunit protein bL17 of Lactobacillus delbrueckii subsp. bulgaricus (strain ATCC 11842 / DSM 20081 / BCRC 10696 / JCM 1002 / NBRC 13953 / NCIMB 11778 / NCTC 12712 / WDCM 00102 / Lb 14).